Here is a 533-residue protein sequence, read N- to C-terminus: Adenosine deaminase (533 aa).

The first 19 residues, 1–19 (MKILLAVVFVLNLTNLAVP), serve as a signal peptide directing secretion.

Belongs to the metallo-dependent hydrolases superfamily. Adenosine and AMP deaminases family. ADGF subfamily. Zn(2+) is required as a cofactor. Post-translationally, proteolytically cleaved by human mast cell tryptase and chymase. Female salivary gland (at protein level).

It localises to the secreted. It carries out the reaction adenosine + H2O + H(+) = inosine + NH4(+). It catalyses the reaction 2'-deoxyadenosine + H2O + H(+) = 2'-deoxyinosine + NH4(+). Catalyzes the deamination of adenosine to inosine and deoxyadenosine to deoxyinosine. Induces degranulation of host mast cells, and secretion of tryptase and IL6. Modulates enzymatic activities of human tryptase and chymase. Induces release of cytokines, such as IL1B, IL6, TNF, CCL2, IFN-beta (INFB1) and ISG15, from host monocytes and macrophages. Activates host NF-kappa-B signaling pathway in TAK1/MAP3K7-dependent manner. Functionally, (Microbial infection) Promotes replication of dengue virus type 2 in host cells probably via modulation of cytokine production in host macrophages and monocytes. The sequence is that of Adenosine deaminase from Aedes albopictus (Asian tiger mosquito).